Reading from the N-terminus, the 383-residue chain is Succinate--CoA ligase [ADP-forming] subunit beta (383 aa).

The 233-residue stretch at 9–241 (KEVLHKFNVS…YDEEVKEEIE (233 aa)) folds into the ATP-grasp domain. ATP-binding positions include lysine 46, 53-55 (GRG), glutamate 99, serine 102, and glutamate 107. 2 residues coordinate Mg(2+): asparagine 196 and aspartate 210. Substrate-binding positions include asparagine 261 and 318-320 (GIM).

The protein belongs to the succinate/malate CoA ligase beta subunit family. As to quaternary structure, heterotetramer of two alpha and two beta subunits. Mg(2+) serves as cofactor.

It catalyses the reaction succinate + ATP + CoA = succinyl-CoA + ADP + phosphate. The catalysed reaction is GTP + succinate + CoA = succinyl-CoA + GDP + phosphate. Its pathway is carbohydrate metabolism; tricarboxylic acid cycle; succinate from succinyl-CoA (ligase route): step 1/1. In terms of biological role, succinyl-CoA synthetase functions in the citric acid cycle (TCA), coupling the hydrolysis of succinyl-CoA to the synthesis of either ATP or GTP and thus represents the only step of substrate-level phosphorylation in the TCA. The beta subunit provides nucleotide specificity of the enzyme and binds the substrate succinate, while the binding sites for coenzyme A and phosphate are found in the alpha subunit. The chain is Succinate--CoA ligase [ADP-forming] subunit beta from Wolbachia sp. subsp. Drosophila simulans (strain wRi).